The following is a 284-amino-acid chain: Undecaprenyl-diphosphatase (284 aa).

Helical transmembrane passes span 1-21 (MNWL…FLPV), 43-63 (ITAF…LYFW), 88-108 (YTLG…GLVF), 116-136 (LSSL…MWLG), 149-169 (IGIV…LFPG), 193-213 (LSFF…SVSA), 225-245 (VAIG…VAYV), and 259-279 (FTGF…LILS).

This sequence belongs to the UppP family.

Its subcellular location is the cell membrane. It carries out the reaction di-trans,octa-cis-undecaprenyl diphosphate + H2O = di-trans,octa-cis-undecaprenyl phosphate + phosphate + H(+). Catalyzes the dephosphorylation of undecaprenyl diphosphate (UPP). Confers resistance to bacitracin. The protein is Undecaprenyl-diphosphatase of Cutibacterium acnes (strain DSM 16379 / KPA171202) (Propionibacterium acnes).